Here is a 345-residue protein sequence, read N- to C-terminus: uncharacterized protein (345 aa).

Residues 1-198 (MDVLSAVLLA…LSEGLLDHEE (198 aa)) enclose the CNNM transmembrane domain. 2 helical membrane-spanning segments follow: residues 3 to 23 (VLSA…FVGA) and 95 to 115 (VPPA…HVLL). 2 CBS domains span residues 217–280 (AVPL…PQTV) and 285–342 (VVRP…MRDG). The chain crosses the membrane as a helical span at residues 312 to 332 (LALVTADNGSVVGMVALEDVV).

It belongs to the TerC family.

The protein localises to the cell membrane. This is an uncharacterized protein from Mycobacterium tuberculosis (strain CDC 1551 / Oshkosh).